We begin with the raw amino-acid sequence, 631 residues long: Phosphomethylpyrimidine synthase (631 aa).

Residues Asn239, Met268, Tyr297, His333, 353–355 (SRG), 394–397 (DGLR), and Glu433 each bind substrate. His437 contacts Zn(2+). Tyr460 serves as a coordination point for substrate. His501 lines the Zn(2+) pocket. [4Fe-4S] cluster is bound by residues Cys581, Cys584, and Cys589.

Belongs to the ThiC family. As to quaternary structure, homodimer. Requires [4Fe-4S] cluster as cofactor.

The catalysed reaction is 5-amino-1-(5-phospho-beta-D-ribosyl)imidazole + S-adenosyl-L-methionine = 4-amino-2-methyl-5-(phosphooxymethyl)pyrimidine + CO + 5'-deoxyadenosine + formate + L-methionine + 3 H(+). It participates in cofactor biosynthesis; thiamine diphosphate biosynthesis. Catalyzes the synthesis of the hydroxymethylpyrimidine phosphate (HMP-P) moiety of thiamine from aminoimidazole ribotide (AIR) in a radical S-adenosyl-L-methionine (SAM)-dependent reaction. The sequence is that of Phosphomethylpyrimidine synthase from Escherichia coli O127:H6 (strain E2348/69 / EPEC).